The primary structure comprises 298 residues: UDP-N-acetylenolpyruvoylglucosamine reductase (298 aa).

Positions 27-191 constitute an FAD-binding PCMH-type domain; that stretch reads TGGNADVFVM…LDATFSLELE (165 aa). Residue Arg-170 is part of the active site. The active-site Proton donor is the Ser-220. The active site involves Glu-290.

This sequence belongs to the MurB family. Requires FAD as cofactor.

The protein resides in the cytoplasm. The enzyme catalyses UDP-N-acetyl-alpha-D-muramate + NADP(+) = UDP-N-acetyl-3-O-(1-carboxyvinyl)-alpha-D-glucosamine + NADPH + H(+). It participates in cell wall biogenesis; peptidoglycan biosynthesis. Functionally, cell wall formation. This Listeria innocua serovar 6a (strain ATCC BAA-680 / CLIP 11262) protein is UDP-N-acetylenolpyruvoylglucosamine reductase.